The sequence spans 470 residues: Peripherin (470 aa).

Residues 1–99 (MSHHPSGLRA…FLATRSNEKQ (99 aa)) are head. Residue Tyr17 is modified to 3'-nitrotyrosine. Ser28, Ser50, and Ser59 each carry phosphoserine. The 311-residue stretch at 97 to 407 (EKQELQELND…KLLEGEESRI (311 aa)) folds into the IF rod domain. The coil 1A stretch occupies residues 100–132 (ELQELNDRFANFIEKVRFLEQQNAALRGELSQA). Residues 133 to 143 (RGQEPARADQL) are linker 1. Positions 144–239 (CQQELRELRR…KLHEEELRDL (96 aa)) are coil 1B. A linker 2 region spans residues 240 to 262 (QVSVESQQVQQVEVEATVKPELT). A coil 2 region spans residues 263 to 405 (AALRDIRAQY…YRKLLEGEES (143 aa)). The residue at position 379 (Tyr379) is a 3'-nitrotyrosine. A tail region spans residues 406–470 (RISVPVHSFA…ELDKSSAHSY (65 aa)). Positions 447-470 (NGEVVTESQKEQRSELDKSSAHSY) are disordered. The span at 454–470 (SQKEQRSELDKSSAHSY) shows a compositional bias: basic and acidic residues. Tyr470 bears the Phosphotyrosine mark.

Belongs to the intermediate filament family. Forms homodimers (in vitro). Homopolymerizes into a filamentous network (in vitro). Forms heterodimers with NEFL, NEFM or NEFH (in vitro). Interacts with DST (via C-terminus). Interacts with RAB7A; the interaction is direct. Interacts with PRKCE (via phorbol-ester/DAG-type 2 domain). In terms of processing, phosphorylated; phosphorylation increases after nerve injury in regenerating neurons. As to expression, expressed in the neurons of the outer hair cells in the organ of Corti and to a lesser extent in type I spiral ganglion cells.

The protein resides in the cytoplasm. The protein localises to the cytoskeleton. It localises to the cell projection. It is found in the axon. Its subcellular location is the perikaryon. Functionally, class-III neuronal intermediate filament protein. May form an independent structural network without the involvement of other neurofilaments or may cooperate with the neuronal intermediate filament proteins NEFL, NEFH, NEFM and INA to form a filamentous network. Assembly of the neuronal intermediate filaments may be regulated by RAB7A. Plays a role in the development of unmyelinated sensory neurons. May be involved in axon elongation and axon regeneration after injury. Inhibits neurite extension in type II spiral ganglion neurons in the cochlea. The polypeptide is Peripherin (PRPH) (Homo sapiens (Human)).